We begin with the raw amino-acid sequence, 79 residues long: Sec-independent protein translocase protein TatA (79 aa).

Residues M1–G21 form a helical membrane-spanning segment.

Belongs to the TatA/E family. The Tat system comprises two distinct complexes: a TatABC complex, containing multiple copies of TatA, TatB and TatC subunits, and a separate TatA complex, containing only TatA subunits. Substrates initially bind to the TatABC complex, which probably triggers association of the separate TatA complex to form the active translocon.

The protein resides in the cell inner membrane. Part of the twin-arginine translocation (Tat) system that transports large folded proteins containing a characteristic twin-arginine motif in their signal peptide across membranes. TatA could form the protein-conducting channel of the Tat system. The sequence is that of Sec-independent protein translocase protein TatA from Campylobacter lari (strain RM2100 / D67 / ATCC BAA-1060).